The following is a 2126-amino-acid chain: Phthioceranic/hydroxyphthioceranic acid synthase (2126 aa).

The Ketosynthase family 3 (KS3) domain maps to 24–447 (VTPVAVIGMA…GTNVHAVVEQ (424 aa)). Cysteine 196 (acyl-thioester intermediate; for beta-ketoacyl synthase activity) is an active-site residue. Active-site for beta-ketoacyl synthase activity residues include histidine 331 and histidine 367. Residues 449-549 (PQTEAQPHAA…VYQPAVGQDD (101 aa)) form a linker domain (LD) region. Positions 550-849 (RGPVWLFSGQ…VAALAGMRRE (300 aa)) are acyltransferase (AT). Catalysis depends on serine 641, which acts as the Acyl-ester intermediate; for acyltransferase activity. The interval 909–1191 (STVAVHPLLG…LAVCGLRIGT (283 aa)) is dehydratase (DH). The N-terminal hotdog fold stretch occupies residues 914 to 1032 (HPLLGAHVRL…RRASAVLQQV (119 aa)). Positions 914–1198 (HPLLGAHVRL…IGTGVSERDK (285 aa)) constitute a PKS/mFAS DH domain. The active-site Proton acceptor; for dehydratase activity is histidine 947. Residues 1051 to 1198 (PCRVDGEDLR…IGTGVSERDK (148 aa)) are C-terminal hotdog fold. Aspartate 1115 functions as the Proton donor; for dehydratase activity in the catalytic mechanism. A pseudo beta-ketoacyl reductase (PsiKR) region spans residues 1227-1398 (KWLLISDCAA…SEEDETAWRD (172 aa)). Positions 1426-1750 (SGMRLQIRTP…EHTGKLVLHI (325 aa)) are enoylreductase (ER). The beta-ketoacyl reductase (KR) stretch occupies residues 1772-2019 (GSYIITGGLG…AERSRFFEVF (248 aa)). Residues 1780–1783 (LGGL), 1803–1806 (SRTQ), 1831–1832 (DI), and 1904–1905 (FS) contribute to the NADP(+) site. Positions 2040–2126 (DEWPARLRQL…DAPAAALSSQ (87 aa)) constitute a Carrier domain. An O-(pantetheine 4'-phosphoryl)serine modification is found at serine 2075.

Requires pantetheine 4'-phosphate as cofactor.

The enzyme catalyses hexadecanoyl-[(hydroxy)phthioceranic acid synthase] + 7 (S)-methylmalonyl-CoA + 14 NADPH + 21 H(+) = C37-phthioceranyl-[(hydroxy)phthioceranic acid synthase] + 7 CO2 + 14 NADP(+) + 7 CoA + 7 H2O. It carries out the reaction hexadecanoyl-[(hydroxy)phthioceranic acid synthase] + 8 (S)-methylmalonyl-CoA + 16 NADPH + 24 H(+) = C40-phthioceranyl-[(hydroxy)phthioceranic acid synthase] + 8 CO2 + 16 NADP(+) + 8 CoA + 8 H2O. The polypeptide is Phthioceranic/hydroxyphthioceranic acid synthase (pks2) (Mycobacterium bovis (strain BCG / Pasteur 1173P2)).